Reading from the N-terminus, the 407-residue chain is 12S rRNA N(4)-cytidine methyltransferase METTL15 (407 aa).

Positions 44–63 are disordered; that stretch reads EAQEETDQTGIQELHRSQDR. S-adenosyl-L-methionine contacts are provided by residues 100-102, Asp119, Phe146, Asp169, and Gln176; that span reads GGH. The residue at position 358 (Ser358) is a Phosphoserine. The disordered stretch occupies residues 386 to 407; that stretch reads EDEDVQDNPRGRSAKLRAAIKL. Positions 397–407 are enriched in basic residues; that stretch reads RSAKLRAAIKL.

The protein belongs to the methyltransferase superfamily. RsmH family.

It localises to the mitochondrion matrix. The catalysed reaction is cytidine(839) in 12S rRNA + S-adenosyl-L-methionine = N(4)-methylcytidine(839) in 12S rRNA + S-adenosyl-L-homocysteine + H(+). Its function is as follows. N4-methylcytidine (m4C) methyltransferase responsible for the methylation of position C839 in mitochondrial 12S rRNA. Involved in the stabilization of 12S rRNA folding, therefore facilitating the assembly of the mitochondrial small ribosomal subunits. The protein is 12S rRNA N(4)-cytidine methyltransferase METTL15 (METTL15) of Bos taurus (Bovine).